The following is a 764-amino-acid chain: 5-methyltetrahydropteroyltriglutamate--homocysteine methyltransferase (764 aa).

Residues Arg-16–Lys-19 and Lys-121 contribute to the 5-methyltetrahydropteroyltri-L-glutamate site. L-homocysteine is bound by residues Ile-440–Ser-442 and Glu-493. L-methionine-binding positions include Ile-440–Ser-442 and Glu-493. Residues Arg-524 to Cys-525 and Trp-570 contribute to the 5-methyltetrahydropteroyltri-L-glutamate site. Asp-608 lines the L-homocysteine pocket. Residue Asp-608 coordinates L-methionine. Glu-614 is a binding site for 5-methyltetrahydropteroyltri-L-glutamate. Residues His-650, Cys-652, and Glu-674 each coordinate Zn(2+). Residue His-703 is the Proton donor of the active site. Residue Cys-735 coordinates Zn(2+).

This sequence belongs to the vitamin-B12 independent methionine synthase family. The cofactor is Zn(2+).

It catalyses the reaction 5-methyltetrahydropteroyltri-L-glutamate + L-homocysteine = tetrahydropteroyltri-L-glutamate + L-methionine. Its pathway is amino-acid biosynthesis; L-methionine biosynthesis via de novo pathway; L-methionine from L-homocysteine (MetE route): step 1/1. Functionally, catalyzes the transfer of a methyl group from 5-methyltetrahydrofolate to homocysteine resulting in methionine formation. The sequence is that of 5-methyltetrahydropteroyltriglutamate--homocysteine methyltransferase from Burkholderia lata (strain ATCC 17760 / DSM 23089 / LMG 22485 / NCIMB 9086 / R18194 / 383).